Reading from the N-terminus, the 179-residue chain is Large ribosomal subunit protein uL6 (179 aa).

Belongs to the universal ribosomal protein uL6 family. As to quaternary structure, part of the 50S ribosomal subunit.

Its function is as follows. This protein binds to the 23S rRNA, and is important in its secondary structure. It is located near the subunit interface in the base of the L7/L12 stalk, and near the tRNA binding site of the peptidyltransferase center. This Mycolicibacterium vanbaalenii (strain DSM 7251 / JCM 13017 / BCRC 16820 / KCTC 9966 / NRRL B-24157 / PYR-1) (Mycobacterium vanbaalenii) protein is Large ribosomal subunit protein uL6.